The following is a 474-amino-acid chain: Bifunctional protein HldE (474 aa).

The tract at residues 1–318 (MKMTLPDFHC…ENAIRGRAET (318 aa)) is ribokinase. 195–198 (NLSE) serves as a coordination point for ATP. The active site involves Asp-264. The segment at 344-474 (MTNGCFDILH…TNIIKAIKNQ (131 aa)) is cytidylyltransferase.

In the N-terminal section; belongs to the carbohydrate kinase PfkB family. This sequence in the C-terminal section; belongs to the cytidylyltransferase family. Homodimer.

The enzyme catalyses D-glycero-beta-D-manno-heptose 7-phosphate + ATP = D-glycero-beta-D-manno-heptose 1,7-bisphosphate + ADP + H(+). The catalysed reaction is D-glycero-beta-D-manno-heptose 1-phosphate + ATP + H(+) = ADP-D-glycero-beta-D-manno-heptose + diphosphate. Its pathway is nucleotide-sugar biosynthesis; ADP-L-glycero-beta-D-manno-heptose biosynthesis; ADP-L-glycero-beta-D-manno-heptose from D-glycero-beta-D-manno-heptose 7-phosphate: step 1/4. It functions in the pathway nucleotide-sugar biosynthesis; ADP-L-glycero-beta-D-manno-heptose biosynthesis; ADP-L-glycero-beta-D-manno-heptose from D-glycero-beta-D-manno-heptose 7-phosphate: step 3/4. It participates in bacterial outer membrane biogenesis; LPS core biosynthesis. Functionally, catalyzes the phosphorylation of D-glycero-D-manno-heptose 7-phosphate at the C-1 position to selectively form D-glycero-beta-D-manno-heptose-1,7-bisphosphate. Catalyzes the ADP transfer from ATP to D-glycero-beta-D-manno-heptose 1-phosphate, yielding ADP-D-glycero-beta-D-manno-heptose. This Photorhabdus laumondii subsp. laumondii (strain DSM 15139 / CIP 105565 / TT01) (Photorhabdus luminescens subsp. laumondii) protein is Bifunctional protein HldE.